The chain runs to 463 residues: Proton-coupled folate transporter (463 aa).

The Cytoplasmic portion of the chain corresponds to 1–27; that stretch reads MVSPDDSPEIRDRPRPRRCLLPASVTV. A helical transmembrane segment spans residues 28-46; that stretch reads EPVIFLSMFALALQGPLAT. The Extracellular portion of the chain corresponds to 47 to 86; sequence QYLWDRLSADIGFNGTRTVGCAMNGSKSAGPEQQEVETLT. 2 N-linked (GlcNAc...) asparagine glycosylation sites follow: Asn60 and Asn70. Cys67 and Cys302 are joined by a disulfide. The chain crosses the membrane as a helical span at residues 87–112; sequence AHWSLYINLGGFLVGLFSVMLLGPWS. Topologically, residues 113–116 are cytoplasmic; sequence DKVG. The helical transmembrane segment at 117 to 139 threads the bilayer; sequence RRPVLMLPCIGLALQAAVYLLVM. Residues 140 to 144 are Extracellular-facing; that stretch reads YQELH. A helical membrane pass occupies residues 145–158; it reads VGYFLIGRFISGIS. Residues 159-181 are Cytoplasmic-facing; sequence GDFNMILAGCFAYIADVSDRQSR. H(+) is bound by residues Asp160 and Glu189. Residues 182 to 207 traverse the membrane as a helical segment; sequence TFRVAVLEACLGIAGMVASIIGGHWR. Residues 208-212 lie on the Extracellular side of the membrane; that stretch reads KAQGY. A helical membrane pass occupies residues 213-231; it reads INPFWLVFAVNLFTALYVY. Over 232–270 the chain is Cytoplasmic; the sequence is FCVEESVKDKKPARLFTHRHYQSFFRLFTVQGENNRRRK. Residues 271–293 traverse the membrane as a helical segment; that stretch reads LFLYSLALLVVVTVHMGAKNLFV. Position 285 (His285) interacts with H(+). At 294–306 the chain is on the extracellular side; the sequence is LYELSYPLCWDSD. The helical transmembrane segment at 307–329 threads the bilayer; it reads LIGYGSAAEHLTYLSSLAGLRLF. Over 330 to 335 the chain is Cytoplasmic; that stretch reads QLCLAD. Residues 336–355 form a helical membrane-spanning segment; the sequence is SWVAEMGFISNISGLVVISL. The Extracellular segment spans residues 356–359; sequence ASTT. The helical transmembrane segment at 360-380 threads the bilayer; it reads PIMFTGYGLRFFAMATTPVIR. Residues 381–392 are Cytoplasmic-facing; it reads SKLSKMVEEGEQ. A helical membrane pass occupies residues 393–418; that stretch reads GALFSSVACVEGLSFLLATGLFNSLY. Over 419–426 the chain is Extracellular; sequence PATLHFMK. Residues 427–445 form a helical membrane-spanning segment; it reads GFPFLLGALLLLIPAGIIG. Residues 446–463 lie on the Cytoplasmic side of the membrane; it reads LIEVCEQKPMYSQFSEIS.

Belongs to the major facilitator superfamily. SLC46A family. Monomer.

It is found in the cell membrane. It localises to the apical cell membrane. Its subcellular location is the basolateral cell membrane. The protein localises to the endosome membrane. The protein resides in the cytoplasm. The enzyme catalyses folate(in) + H(+)(in) = folate(out) + H(+)(out). It catalyses the reaction (6S)-5-methyl-5,6,7,8-tetrahydrofolate(in) + H(+)(in) = (6S)-5-methyl-5,6,7,8-tetrahydrofolate(out) + H(+)(out). It carries out the reaction methotrexate(in) + H(+)(in) = methotrexate(out) + H(+)(out). The catalysed reaction is pemetrexed(in) + H(+)(in) = pemetrexed(out) + H(+)(out). Its function is as follows. Proton-coupled folate symporter that mediates folate absorption using an H(+) gradient as a driving force. Involved in the intestinal absorption of folates at the brush-border membrane of the proximal jejunum, and the transport from blood to cerebrospinal fluid across the choroid plexus. Functions at acidic pH via alternate outward- and inward-open conformation states. Protonation of residues in the outward open state primes the protein for transport. Binding of folate promotes breaking of salt bridge network and subsequent closure of the extracellular gate, leading to the inward-open state and release of protons and folate. Also able to transport antifolate drugs, such as methotrexate and pemetrexed. Also acts as a lower-affinity, pH-independent heme carrier protein and constitutes the main importer of heme in the intestine. Imports heme in the retina and retinal pigment epithelium, in neurons of the hippocampus, in hepatocytes and in the renal epithelial cells. The chain is Proton-coupled folate transporter from Xenopus laevis (African clawed frog).